The chain runs to 240 residues: Glutathione S-transferase theta-1 (240 aa).

One can recognise a GST N-terminal domain in the interval 2–82 (VLELYLDLLS…YLAHKYKVPD (81 aa)). Glutathione-binding positions include histidine 40, 53-54 (KV), and 66-67 (ES). A GST C-terminal domain is found at 88-223 (DLQARARVDE…ILKVRDCPPA (136 aa)).

Belongs to the GST superfamily. Theta family. As to quaternary structure, homodimer. In terms of tissue distribution, in liver, highest expression found in central vein limiting plate hepatocytes. In lung, expressed mainly in club cells of the bronchiolar epithelium and, at low levels, in type II alveolar cells.

It localises to the cytoplasm. It carries out the reaction RX + glutathione = an S-substituted glutathione + a halide anion + H(+). In terms of biological role, conjugation of reduced glutathione to a wide number of exogenous and endogenous hydrophobic electrophiles. Also binds steroids, bilirubin, carcinogens and numerous organic anions. Has dichloromethane dehalogenase activity. The sequence is that of Glutathione S-transferase theta-1 (Gstt1) from Rattus norvegicus (Rat).